A 47-amino-acid chain; its full sequence is Large ribosomal subunit protein bL33 (47 aa).

It belongs to the bacterial ribosomal protein bL33 family.

In Staphylococcus saprophyticus, this protein is Large ribosomal subunit protein bL33.